A 69-amino-acid polypeptide reads, in one-letter code: Protein transport protein Sec61 subunit gamma-1 (69 aa).

An N-acetylmethionine modification is found at Met1. The Cytoplasmic portion of the chain corresponds to 1–32; the sequence is MDAIDSVVDPLRDFAKDSIRLVKRCHKPDRKE. The chain crosses the membrane as a helical span at residues 33 to 61; sequence FTKVAVRTAIGFVVMGFVGFFVKLIFIPI. Topologically, residues 62 to 69 are extracellular; it reads NNIIVGAT.

Belongs to the SecE/SEC61-gamma family. As to quaternary structure, heterotrimeric complex composed of SEC61-alpha, SEC61-beta and SEC61-gamma.

Its subcellular location is the endoplasmic reticulum membrane. In terms of biological role, necessary for protein translocation in the endoplasmic reticulum. This Arabidopsis thaliana (Mouse-ear cress) protein is Protein transport protein Sec61 subunit gamma-1 (SEC61G1).